Reading from the N-terminus, the 1536-residue chain is Glycogen debranching enzyme (1536 aa).

Residues Asp535, His538, and Asp670 contribute to the active site.

Belongs to the glycogen debranching enzyme family. As to quaternary structure, interacts with IGD1.

The protein resides in the mitochondrion. The protein localises to the cytoplasm. The enzyme catalyses Transfers a segment of a (1-&gt;4)-alpha-D-glucan to a new position in an acceptor, which may be glucose or a (1-&gt;4)-alpha-D-glucan.. The catalysed reaction is Hydrolysis of (1-&gt;6)-alpha-D-glucosidic branch linkages in glycogen phosphorylase limit dextrin.. Activity is inhibited by IGD1. Functionally, multifunctional enzyme acting as 1,4-alpha-D-glucan:1,4-alpha-D-glucan 4-alpha-D-glycosyltransferase and amylo-1,6-glucosidase in glycogen degradation. The polypeptide is Glycogen debranching enzyme (GDB1) (Saccharomyces cerevisiae (strain ATCC 204508 / S288c) (Baker's yeast)).